The sequence spans 645 residues: Minor extracellular protease Epr (645 aa).

The first 27 residues, 1–27 (MKNMSCKLVVSVTLFFSFLTIGPLAHA), serve as a signal peptide directing secretion. Residues 28–103 (QNSSEKEVIV…AADSTDFKVL (76 aa)) constitute a propeptide that is removed on maturation. The Peptidase S8 domain occupies 115–382 (QWNLEPIQVK…YGLIQYKAQA (268 aa)). Residues Asp-142, His-172, and Ser-326 each act as charge relay system in the active site. Disordered stretches follow at residues 490–577 (KQAK…KTAL) and 591–645 (AEAK…KPKK). The segment covering 491 to 508 (QAKDKVAKAEKSKKKTDV) has biased composition (basic and acidic residues). Over residues 522-547 (SEKTSLQKRLNKVKSTNLKTAQQSVS) the composition is skewed to polar residues. The span at 592 to 610 (EAKKVETAKAKVKKAEKDK) shows a compositional bias: basic and acidic residues.

This sequence belongs to the peptidase S8 family. In terms of processing, may undergo two steps of processing in its passage through the cell membrane: removal of the N-terminal signal sequence and cleavage of the C-terminal domain. Several active forms of Epr with molecular masses between 40 and 34 kDa were found in the medium of B.subtilis cultures. The size variation of the active forms expressed by the complete epr gene appears to be the result of partial removal of the C-terminus either by processing or degradation.

It is found in the secreted. The protein resides in the cell wall. With respect to regulation, requires Ca(2+) for stability. Activity is inhibited by phenylmethylsulfonyl fluoride (PMSF) and EDTA. Functionally, serine protease. Involved in the production of the competence and sporulation stimulating factor CSF. In addition, is essential for swarming motility. Plays a key role in DegU-mediated swarming motility. The protease activity is dispensable for swarming. Not essential for growth or sporulation. This Bacillus subtilis (strain 168) protein is Minor extracellular protease Epr.